The sequence spans 187 residues: V-type ATP synthase subunit E (187 aa).

It belongs to the V-ATPase E subunit family.

Its function is as follows. Produces ATP from ADP in the presence of a proton gradient across the membrane. This chain is V-type ATP synthase subunit E, found in Clostridioides difficile (strain 630) (Peptoclostridium difficile).